The primary structure comprises 351 residues: Biotin synthase (351 aa).

The 219-residue stretch at 44-262 (NRVQVSTLLS…LAVARILMPQ (219 aa)) folds into the Radical SAM core domain. Cysteine 59, cysteine 63, and cysteine 66 together coordinate [4Fe-4S] cluster. Cysteine 103, cysteine 134, cysteine 194, and arginine 266 together coordinate [2Fe-2S] cluster.

It belongs to the radical SAM superfamily. Biotin synthase family. As to quaternary structure, homodimer. [4Fe-4S] cluster is required as a cofactor. Requires [2Fe-2S] cluster as cofactor.

It catalyses the reaction (4R,5S)-dethiobiotin + (sulfur carrier)-SH + 2 reduced [2Fe-2S]-[ferredoxin] + 2 S-adenosyl-L-methionine = (sulfur carrier)-H + biotin + 2 5'-deoxyadenosine + 2 L-methionine + 2 oxidized [2Fe-2S]-[ferredoxin]. The protein operates within cofactor biosynthesis; biotin biosynthesis; biotin from 7,8-diaminononanoate: step 2/2. Catalyzes the conversion of dethiobiotin (DTB) to biotin by the insertion of a sulfur atom into dethiobiotin via a radical-based mechanism. The protein is Biotin synthase of Pseudomonas fluorescens (strain Pf0-1).